The primary structure comprises 245 residues: NAD-dependent protein deacetylase (245 aa).

A Deacetylase sirtuin-type domain is found at 1 to 245 (MLLLDKINEL…SIGKVLETVI (245 aa)). NAD(+)-binding residues include Ala26, Thr30, Phe37, Arg38, Gln107, Ile109, Asp110, and His125. Position 37 (Phe37) interacts with nicotinamide. Nicotinamide contacts are provided by Ile109 and Asp110. The active-site Proton acceptor is the His125. Zn(2+) contacts are provided by Cys133, Cys136, Cys155, and Cys158. Thr196, Ser197, Asn219, and Ile237 together coordinate NAD(+).

It belongs to the sirtuin family. Class U subfamily. Zn(2+) is required as a cofactor.

It is found in the cytoplasm. It carries out the reaction N(6)-acetyl-L-lysyl-[protein] + NAD(+) + H2O = 2''-O-acetyl-ADP-D-ribose + nicotinamide + L-lysyl-[protein]. In terms of biological role, NAD-dependent protein deacetylase which modulates the activities of several enzymes which are inactive in their acetylated form. This is NAD-dependent protein deacetylase from Clostridium acetobutylicum (strain ATCC 824 / DSM 792 / JCM 1419 / IAM 19013 / LMG 5710 / NBRC 13948 / NRRL B-527 / VKM B-1787 / 2291 / W).